Consider the following 458-residue polypeptide: Periphilin-1 (458 aa).

2 stretches are compositionally biased toward basic and acidic residues: residues 1–18 and 63–107; these read MWSEGRYEYERIPRERAP and EGRS…DGFR. 2 disordered regions span residues 1–51 and 63–284; these read MWSE…SYNR and EGRS…LFED. A Nuclear localization signal motif is present at residues 103 to 109; that stretch reads RDGFRRK. A Glycyl lysine isopeptide (Lys-Gly) (interchain with G-Cter in SUMO2) cross-link involves residue lysine 109. Serine 110, serine 114, serine 133, and serine 140 each carry phosphoserine. Residues 116–142 show a composition bias toward basic and acidic residues; sequence YARERSPYKRDNTFFRESPVGRKDSPH. The span at 143 to 154 shows a compositional bias: low complexity; the sequence is SRSGSSVSSRSY. Lysine 160 participates in a covalent cross-link: Glycyl lysine isopeptide (Lys-Gly) (interchain with G-Cter in SUMO2). Phosphoserine occurs at positions 161 and 167. Lysine 180 is covalently cross-linked (Glycyl lysine isopeptide (Lys-Gly) (interchain with G-Cter in SUMO2)). Basic and acidic residues predominate over residues 181–194; that stretch reads RQNEGNPERDKERP. Serine 197 carries the phosphoserine modification. A Glycyl lysine isopeptide (Lys-Gly) (interchain with G-Cter in SUMO2) cross-link involves residue lysine 199. A phosphoserine mark is found at serine 201 and serine 205. The span at 205-215 shows a compositional bias: low complexity; sequence SPSSGSAVSSS. The segment covering 217–230 has biased composition (basic and acidic residues); that stretch reads VLDKPSRLTEKELA. Residue lysine 227 forms a Glycyl lysine isopeptide (Lys-Gly) (interchain with G-Cter in SUMO2) linkage. Lysine 235 and lysine 240 each carry N6-acetyllysine; alternate. Residues lysine 235 and lysine 240 each participate in a glycyl lysine isopeptide (Lys-Gly) (interchain with G-Cter in SUMO2); alternate cross-link. Over residues 237-246 the composition is skewed to basic and acidic residues; the sequence is AAEKLEKSDE. Residue serine 325 is modified to Phosphoserine. Residue lysine 328 forms a Glycyl lysine isopeptide (Lys-Gly) (interchain with G-Cter in SUMO2) linkage. The interval 345–406 is disordered; it reads GQTWQQVPPV…TQLRRTTGAP (62 aa). Positions 377 to 386 are enriched in pro residues; it reads PQPPQAPQPL. Positions 388-398 are enriched in basic residues; that stretch reads PRKKRVRRTTQ. Lysine 453 is covalently cross-linked (Glycyl lysine isopeptide (Lys-Gly) (interchain with G-Cter in SUMO2)).

As to quaternary structure, homodimer. Component of the HUSH complex; at least composed of TASOR, PPHLN1 and MPHOSPH8. Interacts with SIN3A and HDAC1. May interact with PPL. Substrate of transglutaminase (in vitro). Ubiquitous.

It is found in the nucleus. The protein localises to the cytoplasm. The protein resides in the chromosome. Its function is as follows. Component of the HUSH complex, a multiprotein complex that mediates epigenetic repression. The HUSH complex is recruited to genomic loci rich in H3K9me3 and is probably required to maintain transcriptional silencing by promoting recruitment of SETDB1, a histone methyltransferase that mediates further deposition of H3K9me3. In the HUSH complex, contributes to the maintenance of the complex at chromatin. Acts as a transcriptional corepressor and regulates the cell cycle, probably via the HUSH complex. The HUSH complex is also involved in the silencing of unintegrated retroviral DNA: some part of the retroviral DNA formed immediately after infection remains unintegrated in the host genome and is transcriptionally repressed. May be involved in epithelial differentiation by contributing to epidermal integrity and barrier formation. This Homo sapiens (Human) protein is Periphilin-1.